The primary structure comprises 2511 residues: Chromodomain-helicase-DNA-binding protein 8 (2511 aa).

Positions Pro-484 to Lys-615 are disordered. Over residues Gly-515 to Gly-524 the composition is skewed to gly residues. A compositionally biased stretch (basic residues) spans Lys-604–Lys-615. Chromo domains follow at residues Ala-680–Arg-745 and Val-760–Arg-826. In terms of domain architecture, Helicase ATP-binding spans Leu-859–Ala-1033. Asp-872 to Thr-879 contacts ATP. The short motif at Asp-984–His-987 is the DEAH box element. The 157-residue stretch at Leu-1174 to Ile-1330 folds into the Helicase C-terminal domain. Disordered regions lie at residues Thr-1440–Gly-1482, Glu-1715–Pro-1736, Ser-2086–Pro-2168, and Pro-2468–Asp-2511. Positions Asp-1452 to Asp-1461 are enriched in acidic residues. A compositionally biased stretch (low complexity) spans Asp-2111–Asp-2125.

The protein belongs to the SNF2/RAD54 helicase family. CHD8 subfamily. As to quaternary structure, component of some MLL1/MLL complex.

It is found in the nucleus. The enzyme catalyses ATP + H2O = ADP + phosphate + H(+). Its function is as follows. ATP-dependent chromatin-remodeling factor, it slides nucleosomes along DNA; nucleosome sliding requires ATP. Acts as a transcription repressor by remodeling chromatin structure and recruiting histone H1 to target genes. Suppresses p53/tp53-mediated apoptosis by recruiting histone H1 and preventing p53/tp53 transactivation activity. Acts as a negative regulator of Wnt signaling pathway by regulating beta-catenin (ctnnb1) activity. Negatively regulates ctnnb1-targeted gene expression by being recruited specifically to the promoter regions of several ctnnb1 responsive genes. May also act as a transcription activator by participating in efficient U6 RNA polymerase III transcription. The sequence is that of Chromodomain-helicase-DNA-binding protein 8 from Danio rerio (Zebrafish).